We begin with the raw amino-acid sequence, 270 residues long: Mevalonyl-coenzyme A hydratase sidH (270 aa).

The short motif at 268–270 (SKL) is the PTS1-type peroxisomal targeting signal element.

This sequence belongs to the enoyl-CoA hydratase/isomerase family.

It is found in the peroxisome. It functions in the pathway siderophore biosynthesis. Its function is as follows. Mevalonyl-coenzyme A hydratase; part of the siderophore biosynthetic pathway. Aspergillus fumigatus produces 4 types of siderophores, low-molecular-mass iron chelators, including excreted fusarinine C (FsC) and triacetylfusarinine C (TAFC) for iron uptake and intacellular ferricrocin (FC) for hyphal and hydroxyferricrocin (HFC) for conidial iron distribution and storage. TAFC consists of 3 N(2)-acetyl-N(5)-anhydromevalonyl-N(5)-hydroxyornithine residues cyclically linked by ester bonds; FC is a cyclic hexapeptide with the structure Gly-Ser-Gly-(N(5)-acetyl-N(5)-hydroxyornithine)x3. The biosynthesis of all four siderophores depends on the hydroxylation of ornithine, catalyzed by the monooxygenase sidA. Subsequently, the pathways for biosynthesis of extra- and intracellular siderophores split. For biosynthesis of extracellular siderophores, the transacylase sidF transfers anhydromevalonyl to N(5)-hydroxyornithine. The required anhydromevalonyl-CoA moiety is derived from mevalonate by CoA ligation and dehydration catalyzed by sidI and sidH respectively. The acetylation of N(5)-hydroxyornithine for FC biosynthesis involves the constitutively expressed sidL. FC is hydroxylated to HFC by an as yet uncharacterized enzyme during conidiation. Assembly of fusarinine C (FsC) and FC is catalyzed by two different nonribosomal peptide synthetases (NRPS), sidD and sidC respectively. Subsequently, sidG catalyzes N2-acetylation of FsC for forming TAFC. Both extra- and intracellular siderophores are crucial for growth during iron limitation and virulence. This Aspergillus fumigatus (strain ATCC MYA-4609 / CBS 101355 / FGSC A1100 / Af293) (Neosartorya fumigata) protein is Mevalonyl-coenzyme A hydratase sidH.